The sequence spans 462 residues: Argininosuccinate lyase (462 aa).

It belongs to the lyase 1 family. Argininosuccinate lyase subfamily.

It localises to the cytoplasm. It catalyses the reaction 2-(N(omega)-L-arginino)succinate = fumarate + L-arginine. The protein operates within amino-acid biosynthesis; L-arginine biosynthesis; L-arginine from L-ornithine and carbamoyl phosphate: step 3/3. The polypeptide is Argininosuccinate lyase (Methylobacterium nodulans (strain LMG 21967 / CNCM I-2342 / ORS 2060)).